Here is a 589-residue protein sequence, read N- to C-terminus: Serine/threonine-protein phosphatase 2A 65 kDa regulatory subunit A alpha isoform (589 aa).

An N-acetylalanine modification is found at alanine 2. HEAT repeat units lie at residues 8–46 (DSLY…GVER), 47–84 (TRSE…GGPE), 85–123 (YVHC…SPSD), 124–161 (LEAH…VSSA), 162–200 (VKAE…ELDN), 201–239 (VKSE…PQED), 240–278 (LEAL…GPEI), 279–321 (TKTD…RENV), 322–360 (IMSQ…GKDN), 361–399 (TIEH…GIRQ), 400–438 (LSQS…GVEF), 439–477 (FDEK…GKEW), 478–516 (AHAT…GQDI), 517–555 (TTKH…DNST), and 556–589 (LQSE…LSLA). Residues 8-399 (DSLYPIAVLI…CVNEVIGIRQ (392 aa)) are PP2A subunit B binding. The interval 47 to 321 (TRSELLPFLT…NLSADCRENV (275 aa)) is polyoma small and medium T antigens Binding. Positions 85–239 (YVHCLLPPLE…NIAQLLPQED (155 aa)) are SV40 small T antigen binding. Lysine 280 is modified (N6-acetyllysine). The segment at 400–589 (LSQSLLPAIV…QEALTVLSLA (190 aa)) is PP2A subunit C binding.

Belongs to the phosphatase 2A regulatory subunit A family. As to quaternary structure, PP2A consists of a common heterodimeric core enzyme, composed of PPP2CA a 36 kDa catalytic subunit (subunit C) and PPP2R1A a 65 kDa constant regulatory subunit (PR65 or subunit A), that associates with a variety of regulatory subunits. Proteins that associate with the core dimer include three families of regulatory subunits B (the R2/B/PR55/B55, R3/B''/PR72/PR130/PR59 and R5/B'/B56 families), the 48 kDa variable regulatory subunit, viral proteins, and cell signaling molecules. Found in a complex with at least ARL2, PPP2CB, PPP2R1A, PPP2R2A, PPP2R5E and TBCD. Interacts with the PP2A C catalytic subunit PPP2CA. Interacts with the PP2A B subunit PPP2R2A. Interacts with the PP2A B subunit PPP2R5D. Interacts with FOXO1; the interaction dephosphorylates FOXO1 on AKT-mediated phosphorylation sites. Interacts with IPO9. Interacts with TP53 and SGO1. Interacts with PLA2G16; this interaction might decrease PP2A activity. Interacts with CTTNBP2NL. Interacts with GNA12; the interaction promotes protein phosphatase 2A activation causing dephosphorylation of MAPT. Interacts with CIP2A; this interaction stabilizes CIP2A. Interacts with PABIR1/FAM122A. Interacts with ADCY8; antagonizes interaction between ADCY8 and calmodulin. Interacts with CRTC3 (when phosphorylated at 'Ser-391'). Interacts with SPRY2. Part of the core of STRIPAK complexes composed of PP2A catalytic and scaffolding subunits, the striatins (PP2A regulatory subunits), the striatin-associated proteins MOB4, STRIP1 and STRIP2, PDCD10 and members of the STE20 kinases, such as STK24 and STK26. Component of the Integrator-PP2A (INTAC) complex, composed of the Integrator core complex and protein phosphatase 2A subunits PPP2CA and PPP2R1A. (Microbial infection) Interacts with JC virus small t antigen; this interaction inhibits PPP2R1A activity.

The protein resides in the cytoplasm. Its subcellular location is the nucleus. It is found in the chromosome. It localises to the centromere. The protein localises to the lateral cell membrane. The protein resides in the cell projection. Its subcellular location is the dendrite. Its function is as follows. The PR65 subunit of protein phosphatase 2A serves as a scaffolding molecule to coordinate the assembly of the catalytic subunit and a variable regulatory B subunit. Upon interaction with GNA12 promotes dephosphorylation of microtubule associated protein TAU/MAPT. Required for proper chromosome segregation and for centromeric localization of SGO1 in mitosis. Together with RACK1 adapter, mediates dephosphorylation of AKT1 at 'Ser-473', preventing AKT1 activation and AKT-mTOR signaling pathway. Dephosphorylation of AKT1 is essential for regulatory T-cells (Treg) homeostasis and stability. Part of the striatin-interacting phosphatase and kinase (STRIPAK) complexes. STRIPAK complexes have critical roles in protein (de)phosphorylation and are regulators of multiple signaling pathways including Hippo, MAPK, nuclear receptor and cytoskeleton remodeling. Different types of STRIPAK complexes are involved in a variety of biological processes such as cell growth, differentiation, apoptosis, metabolism and immune regulation. Key mediator of a quality checkpoint during transcription elongation as part of the Integrator-PP2A (INTAC) complex. The INTAC complex drives premature transcription termination of transcripts that are unfavorably configured for transcriptional elongation: within the INTAC complex, acts as a scaffolding subunit for PPP2CA, which catalyzes dephosphorylation of the C-terminal domain (CTD) of Pol II subunit POLR2A/RPB1 and SUPT5H/SPT5, thereby preventing transcriptional elongation. Regulates the recruitment of the SKA complex to kinetochores. This Homo sapiens (Human) protein is Serine/threonine-protein phosphatase 2A 65 kDa regulatory subunit A alpha isoform.